Here is a 334-residue protein sequence, read N- to C-terminus: Tryptophan--tRNA ligase (334 aa).

Residues 11–13 (QPS) and 19–20 (GN) contribute to the ATP site. The 'HIGH' region motif lies at 12-20 (PSGELTIGN). Residue aspartate 135 participates in L-tryptophan binding. ATP-binding positions include 147 to 149 (GED), valine 186, and 195 to 199 (KMSKS). The 'KMSKS' region motif lies at 195-199 (KMSKS).

It belongs to the class-I aminoacyl-tRNA synthetase family. Homodimer.

It is found in the cytoplasm. It carries out the reaction tRNA(Trp) + L-tryptophan + ATP = L-tryptophyl-tRNA(Trp) + AMP + diphosphate + H(+). Its function is as follows. Catalyzes the attachment of tryptophan to tRNA(Trp). This Klebsiella aerogenes (Enterobacter aerogenes) protein is Tryptophan--tRNA ligase.